Reading from the N-terminus, the 100-residue chain is Integration host factor subunit alpha (100 aa).

Belongs to the bacterial histone-like protein family. In terms of assembly, heterodimer of an alpha and a beta chain.

In terms of biological role, this protein is one of the two subunits of integration host factor, a specific DNA-binding protein that functions in genetic recombination as well as in transcriptional and translational control. This is Integration host factor subunit alpha from Rhizorhabdus wittichii (strain DSM 6014 / CCUG 31198 / JCM 15750 / NBRC 105917 / EY 4224 / RW1) (Sphingomonas wittichii).